The following is a 370-amino-acid chain: UDP-N-acetylglucosamine--N-acetylmuramyl-(pentapeptide) pyrophosphoryl-undecaprenol N-acetylglucosamine transferase (370 aa).

UDP-N-acetyl-alpha-D-glucosamine is bound by residues 10-12 (TGG), Asn124, Arg166, Ser198, Ile252, and Gln297.

This sequence belongs to the glycosyltransferase 28 family. MurG subfamily.

It localises to the cell membrane. The catalysed reaction is di-trans,octa-cis-undecaprenyl diphospho-N-acetyl-alpha-D-muramoyl-L-alanyl-D-glutamyl-meso-2,6-diaminopimeloyl-D-alanyl-D-alanine + UDP-N-acetyl-alpha-D-glucosamine = di-trans,octa-cis-undecaprenyl diphospho-[N-acetyl-alpha-D-glucosaminyl-(1-&gt;4)]-N-acetyl-alpha-D-muramoyl-L-alanyl-D-glutamyl-meso-2,6-diaminopimeloyl-D-alanyl-D-alanine + UDP + H(+). Its pathway is cell wall biogenesis; peptidoglycan biosynthesis. In terms of biological role, cell wall formation. Catalyzes the transfer of a GlcNAc subunit on undecaprenyl-pyrophosphoryl-MurNAc-pentapeptide (lipid intermediate I) to form undecaprenyl-pyrophosphoryl-MurNAc-(pentapeptide)GlcNAc (lipid intermediate II). The protein is UDP-N-acetylglucosamine--N-acetylmuramyl-(pentapeptide) pyrophosphoryl-undecaprenol N-acetylglucosamine transferase of Finegoldia magna (strain ATCC 29328 / DSM 20472 / WAL 2508) (Peptostreptococcus magnus).